Reading from the N-terminus, the 251-residue chain is Vacuolar protein sorting-associated protein 37D (251 aa).

The VPS37 C-terminal domain maps to 93–182 (AENCADKLQR…RRRERSAQPA (90 aa)). Residues 174-251 (RRERSAQPAP…RPSQPEPPHR (78 aa)) are disordered. A compositionally biased stretch (pro residues) spans 221-251 (PVPPLKGSPGCPLGPAPLLSPRPSQPEPPHR).

The protein belongs to the VPS37 family. Component of the ESCRT-I complex (endosomal sorting complex required for transport I) which consists of TSG101, VPS28, a VPS37 protein (VPS37A to -D) and MVB12A or MVB12B in a 1:1:1:1 stoichiometry. Interacts with TSG101 and MVB12A. Component of the ESCRT-I complex (endosomal sorting complex required for transport I) which consists of TSG101, VPS28, a VPS37 protein (VPS37A to -D) and UBAP1 in a 1:1:1:1 stoichiometry.

It localises to the late endosome membrane. In terms of biological role, component of the ESCRT-I complex, a regulator of vesicular trafficking process. Required for the sorting of endocytic ubiquitinated cargos into multivesicular bodies. May be involved in cell growth and differentiation. The polypeptide is Vacuolar protein sorting-associated protein 37D (Homo sapiens (Human)).